We begin with the raw amino-acid sequence, 313 residues long: Adhesin MafA 1/2 (313 aa).

Residues Met-1–Ala-14 form the signal peptide. Residue Cys-15 is the site of N-palmitoyl cysteine attachment. A lipid anchor (S-diacylglycerol cysteine) is attached at Cys-15. The span at Gly-282 to Lys-298 shows a compositional bias: polar residues. The segment at Gly-282–Gly-313 is disordered.

This sequence belongs to the MafA family.

The protein resides in the cell outer membrane. In Neisseria meningitidis serogroup C (strain 053442), this protein is Adhesin MafA 1/2 (mafA1).